A 290-amino-acid polypeptide reads, in one-letter code: NAD kinase (290 aa).

Catalysis depends on Asp72, which acts as the Proton acceptor. NAD(+) is bound by residues Asp72–Gly73, Lys77, Asn145–Glu146, Asp175, Thr186–Ser191, and Ala210.

It belongs to the NAD kinase family. A divalent metal cation serves as cofactor.

It is found in the cytoplasm. The enzyme catalyses NAD(+) + ATP = ADP + NADP(+) + H(+). Involved in the regulation of the intracellular balance of NAD and NADP, and is a key enzyme in the biosynthesis of NADP. Catalyzes specifically the phosphorylation on 2'-hydroxyl of the adenosine moiety of NAD to yield NADP. This chain is NAD kinase, found in Bacteroides fragilis (strain YCH46).